We begin with the raw amino-acid sequence, 151 residues long: Probable ribonuclease P/MRP protein subunit POP5 (151 aa).

The protein belongs to the eukaryotic/archaeal RNase P protein component 2 family. In terms of assembly, component of nuclear RNase P and RNase MRP ribonucleoproteins. Interacts with GAF1/RPP30.

It is found in the nucleus. Its subcellular location is the nucleolus. Functionally, essential protein required during embryogenesis. Component of ribonuclease P, a protein complex that generates mature tRNA molecules by cleaving their 5'-ends. Also a component of RNase MRP. The chain is Probable ribonuclease P/MRP protein subunit POP5 (EMB1687) from Arabidopsis thaliana (Mouse-ear cress).